Reading from the N-terminus, the 650-residue chain is Chaperone protein HtpG (650 aa).

Residues 1–349 (MTKTTKKFET…SSDLPLNVSR (349 aa)) are a; substrate-binding. Positions 350–566 (EILQEDVQIK…EHGLNANMER (217 aa)) are b. A c region spans residues 567 to 650 (ILRAMNQDVP…VADGKAAAGE (84 aa)).

The protein belongs to the heat shock protein 90 family. Homodimer.

It localises to the cytoplasm. Molecular chaperone. Has ATPase activity. The sequence is that of Chaperone protein HtpG from Geobacter metallireducens (strain ATCC 53774 / DSM 7210 / GS-15).